The following is a 141-amino-acid chain: Drosulfakinins (141 aa).

The first 33 residues, methionine 1–threonine 33, serve as a signal peptide directing secretion. The propeptide occupies threonine 34–aspartate 73. Positions lysine 51–glycine 72 are disordered. Phenylalanine amide is present on phenylalanine 82. A propeptide spanning residues valine 86 to alanine 111 is cleaved from the precursor. At tyrosine 117 the chain carries Sulfotyrosine. Position 122 is a phenylalanine amide (phenylalanine 122). Tyrosine 134 is subject to Sulfotyrosine. Residue phenylalanine 139 is modified to Phenylalanine amide.

This sequence belongs to the gastrin/cholecystokinin family.

The protein localises to the secreted. In terms of biological role, drosulfakinin-0 (DSK 0) plays diverse biological roles including regulating gut muscle contraction in adults but not in larvae. The sequence is that of Drosulfakinins from Drosophila mauritiana (Fruit fly).